Consider the following 477-residue polypeptide: Cysteine--tRNA ligase (477 aa).

Position 29 (Cys29) interacts with Zn(2+). The 'HIGH' region signature appears at 31–41; it reads PTVYDFAHIGN. 3 residues coordinate Zn(2+): Cys224, His249, and Glu253. Residues 282 to 286 carry the 'KMSKS' region motif; that stretch reads KMSKS. Lys285 lines the ATP pocket.

This sequence belongs to the class-I aminoacyl-tRNA synthetase family. As to quaternary structure, monomer. Zn(2+) serves as cofactor.

Its subcellular location is the cytoplasm. It catalyses the reaction tRNA(Cys) + L-cysteine + ATP = L-cysteinyl-tRNA(Cys) + AMP + diphosphate. The polypeptide is Cysteine--tRNA ligase (Nitrobacter winogradskyi (strain ATCC 25391 / DSM 10237 / CIP 104748 / NCIMB 11846 / Nb-255)).